The sequence spans 340 residues: Glutamine synthetase (340 aa).

The GS beta-grasp domain occupies Ile3–Thr82. The GS catalytic domain maps to Thr88–Ile340. Mg(2+) contacts are provided by Glu109, Glu111, Glu171, and Glu178. An L-glutamate-binding site is contributed by Glu276.

Belongs to the glutamine synthetase family. In terms of assembly, homooctamer and homotetramer. It depends on Mg(2+) as a cofactor.

Its subcellular location is the cytoplasm. It carries out the reaction L-glutamate + NH4(+) + ATP = L-glutamine + ADP + phosphate + H(+). Its function is as follows. Catalyzes the ATP-dependent biosynthesis of glutamine from glutamate and ammonia. This Streptomyces hygroscopicus protein is Glutamine synthetase.